A 98-amino-acid chain; its full sequence is NADH-ubiquinone oxidoreductase chain 4L (98 aa).

Transmembrane regions (helical) follow at residues 2–22, 26–46, and 59–79; these read TSAF…TFMF, LMST…MTST, and IPIT…ALLV.

The protein belongs to the complex I subunit 4L family. In terms of assembly, core subunit of respiratory chain NADH dehydrogenase (Complex I) which is composed of 45 different subunits.

It is found in the mitochondrion inner membrane. It carries out the reaction a ubiquinone + NADH + 5 H(+)(in) = a ubiquinol + NAD(+) + 4 H(+)(out). Its function is as follows. Core subunit of the mitochondrial membrane respiratory chain NADH dehydrogenase (Complex I) which catalyzes electron transfer from NADH through the respiratory chain, using ubiquinone as an electron acceptor. Part of the enzyme membrane arm which is embedded in the lipid bilayer and involved in proton translocation. The sequence is that of NADH-ubiquinone oxidoreductase chain 4L from Rattus norvegicus (Rat).